The sequence spans 305 residues: N-acetylmuramic acid 6-phosphate etherase (305 aa).

Residues 61 to 224 (ISDALAKGGR…STGAMVKLGK (164 aa)) form the SIS domain. Residue Glu-89 is the Proton donor of the active site. Residue Glu-120 is part of the active site.

The protein belongs to the GCKR-like family. MurNAc-6-P etherase subfamily. Homodimer.

It catalyses the reaction N-acetyl-D-muramate 6-phosphate + H2O = N-acetyl-D-glucosamine 6-phosphate + (R)-lactate. Its pathway is amino-sugar metabolism; N-acetylmuramate degradation. In terms of biological role, specifically catalyzes the cleavage of the D-lactyl ether substituent of MurNAc 6-phosphate, producing GlcNAc 6-phosphate and D-lactate. In Synechocystis sp. (strain ATCC 27184 / PCC 6803 / Kazusa), this protein is N-acetylmuramic acid 6-phosphate etherase.